The following is a 265-amino-acid chain: 3-methyl-2-oxobutanoate hydroxymethyltransferase (265 aa).

Mg(2+) contacts are provided by aspartate 45 and aspartate 84. Residues 45-46 (DS), aspartate 84, and lysine 112 contribute to the 3-methyl-2-oxobutanoate site. Glutamate 114 contacts Mg(2+). Residue glutamate 181 is the Proton acceptor of the active site.

Belongs to the PanB family. As to quaternary structure, homodecamer; pentamer of dimers. It depends on Mg(2+) as a cofactor.

It is found in the cytoplasm. The enzyme catalyses 3-methyl-2-oxobutanoate + (6R)-5,10-methylene-5,6,7,8-tetrahydrofolate + H2O = 2-dehydropantoate + (6S)-5,6,7,8-tetrahydrofolate. It participates in cofactor biosynthesis; (R)-pantothenate biosynthesis; (R)-pantoate from 3-methyl-2-oxobutanoate: step 1/2. Catalyzes the reversible reaction in which hydroxymethyl group from 5,10-methylenetetrahydrofolate is transferred onto alpha-ketoisovalerate to form ketopantoate. The protein is 3-methyl-2-oxobutanoate hydroxymethyltransferase of Yersinia enterocolitica serotype O:8 / biotype 1B (strain NCTC 13174 / 8081).